The primary structure comprises 287 residues: MADPSASLNLVEACWRDLVLGVVQGLTEFLPISSTAHLKVVPELLGWGDPGVSVTAAIQLGSIAAVIAYFRTDLSQVLRGVSRAFRYGQWREPEARLGFAMVVGTLPILVIGLGIKFAWSQGYEQSPLRSIPSIAIVSIVMALLLALAEQVGARSKQLDVVLGRDGLLVGLAQALALLPGVSRSGSTLTAALFDGWQRADAARFSFLLGIPGITIAGLVELKDALAASPGNGPLPLLVGIGSAAVVSWLAIDWLLKFLQRNSTWLFVAYRLVFGLLLLVWWGVYGSH.

Transmembrane regions (helical) follow at residues 50–70 (PGVS…IAYF), 97–117 (LGFA…GIKF), 131–151 (IPSI…AEQV), 160–180 (VVLG…LLPG), 206–226 (FLLG…DALA), 234–254 (LPLL…IDWL), and 264–284 (WLFV…WGVY).

The protein belongs to the UppP family.

The protein resides in the cell inner membrane. The enzyme catalyses di-trans,octa-cis-undecaprenyl diphosphate + H2O = di-trans,octa-cis-undecaprenyl phosphate + phosphate + H(+). Functionally, catalyzes the dephosphorylation of undecaprenyl diphosphate (UPP). Confers resistance to bacitracin. The sequence is that of Undecaprenyl-diphosphatase from Synechococcus sp. (strain CC9605).